The following is an 82-amino-acid chain: Small ribosomal subunit protein bS16 (82 aa).

Belongs to the bacterial ribosomal protein bS16 family.

The polypeptide is Small ribosomal subunit protein bS16 (Alcanivorax borkumensis (strain ATCC 700651 / DSM 11573 / NCIMB 13689 / SK2)).